Here is a 257-residue protein sequence, read N- to C-terminus: UPF0246 protein BPP3440 (257 aa).

It belongs to the UPF0246 family.

In Bordetella parapertussis (strain 12822 / ATCC BAA-587 / NCTC 13253), this protein is UPF0246 protein BPP3440.